A 258-amino-acid chain; its full sequence is Lipoprotein-releasing system ATP-binding protein LolD (258 aa).

An ABC transporter domain is found at 5–244; the sequence is LQCCQLSKSY…PTSSITDPAN (240 aa). Residue 41-48 participates in ATP binding; that stretch reads GSSGCGKS. The tract at residues 222–258 is disordered; sequence LRPLSDNSEQALPPTSSITDPANNIKDNEPQANERHV. A compositionally biased stretch (polar residues) spans 226-243; sequence SDNSEQALPPTSSITDPA. Basic and acidic residues predominate over residues 247-258; that stretch reads KDNEPQANERHV.

The protein belongs to the ABC transporter superfamily. Lipoprotein translocase (TC 3.A.1.125) family. In terms of assembly, the complex is composed of two ATP-binding proteins (LolD) and two transmembrane proteins (LolC and LolE).

Its subcellular location is the cell inner membrane. Functionally, part of the ABC transporter complex LolCDE involved in the translocation of mature outer membrane-directed lipoproteins, from the inner membrane to the periplasmic chaperone, LolA. Responsible for the formation of the LolA-lipoprotein complex in an ATP-dependent manner. The chain is Lipoprotein-releasing system ATP-binding protein LolD from Colwellia psychrerythraea (strain 34H / ATCC BAA-681) (Vibrio psychroerythus).